The following is a 232-amino-acid chain: Small ribosomal subunit protein uS3 (232 aa).

One can recognise a KH type-2 domain in the interval 39-107 (IRAFLKKKLY…EVNVNIKEER (69 aa)). The tract at residues 212–232 (VQPEKTEDDAPKKTRRPRRGK) is disordered. The segment covering 213 to 223 (QPEKTEDDAPK) has biased composition (basic and acidic residues).

It belongs to the universal ribosomal protein uS3 family. In terms of assembly, part of the 30S ribosomal subunit. Forms a tight complex with proteins S10 and S14.

Functionally, binds the lower part of the 30S subunit head. Binds mRNA in the 70S ribosome, positioning it for translation. This chain is Small ribosomal subunit protein uS3, found in Campylobacter curvus (strain 525.92).